Here is a 379-residue protein sequence, read N- to C-terminus: MDSRPTVVEIDLAALRHNFSLVQKRVPEGCGLLAVVKADAYGHGFQYVSEELEKLGVDAFAVAFLAEGVQLRMSGITRPVLILGGIYPGEERRLIGLNISTALFSLEQAAALDQAALEIKCYRKAHIHLKVDTGMGRLGVPYHEVPEFLAKLKQFKNLELEGIFSHFASADELDPEGIAFTRLQAERFNAAVEEARRQGYAPSYVHVANSAAILAQDLPYCNLARPGIILYGALPSGDFEGQVPSQPVMRLKSRVAMLKWVEPGTSISYGRRYVATERALIASVPVGYADGYCRSLTNKGEALIRGQRAKVAGTVCMDWIMLDVTNVKGVAVGDDVTLLGPDPMGDCISAEEMAEKAGTIPYEVLCGIATRRVRRVYLG.

Catalysis depends on Lys-37, which acts as the Proton acceptor; specific for D-alanine. N6-(pyridoxal phosphate)lysine is present on Lys-37. Arg-137 lines the substrate pocket. Tyr-269 acts as the Proton acceptor; specific for L-alanine in catalysis. Substrate is bound at residue Met-317.

The protein belongs to the alanine racemase family. The cofactor is pyridoxal 5'-phosphate.

The catalysed reaction is L-alanine = D-alanine. Its pathway is amino-acid biosynthesis; D-alanine biosynthesis; D-alanine from L-alanine: step 1/1. Functionally, catalyzes the interconversion of L-alanine and D-alanine. May also act on other amino acids. The sequence is that of Alanine racemase (alr) from Geobacter sp. (strain M21).